Consider the following 95-residue polypeptide: Large ribosomal subunit protein bL21 (95 aa).

The protein belongs to the bacterial ribosomal protein bL21 family. In terms of assembly, part of the 50S ribosomal subunit. Contacts protein L20.

This protein binds to 23S rRNA in the presence of protein L20. This is Large ribosomal subunit protein bL21 from Rubrobacter xylanophilus (strain DSM 9941 / JCM 11954 / NBRC 16129 / PRD-1).